Reading from the N-terminus, the 252-residue chain is Imidazole glycerol phosphate synthase subunit HisF (252 aa).

Catalysis depends on residues Asp-11 and Asp-130.

This sequence belongs to the HisA/HisF family. In terms of assembly, heterodimer of HisH and HisF.

Its subcellular location is the cytoplasm. It catalyses the reaction 5-[(5-phospho-1-deoxy-D-ribulos-1-ylimino)methylamino]-1-(5-phospho-beta-D-ribosyl)imidazole-4-carboxamide + L-glutamine = D-erythro-1-(imidazol-4-yl)glycerol 3-phosphate + 5-amino-1-(5-phospho-beta-D-ribosyl)imidazole-4-carboxamide + L-glutamate + H(+). Its pathway is amino-acid biosynthesis; L-histidine biosynthesis; L-histidine from 5-phospho-alpha-D-ribose 1-diphosphate: step 5/9. IGPS catalyzes the conversion of PRFAR and glutamine to IGP, AICAR and glutamate. The HisF subunit catalyzes the cyclization activity that produces IGP and AICAR from PRFAR using the ammonia provided by the HisH subunit. The chain is Imidazole glycerol phosphate synthase subunit HisF from Streptococcus gordonii (strain Challis / ATCC 35105 / BCRC 15272 / CH1 / DL1 / V288).